The following is a 179-amino-acid chain: Peptide deformylase (179 aa).

Cys-102 and His-144 together coordinate Fe cation. Residue Glu-145 is part of the active site. A Fe cation-binding site is contributed by His-148.

It belongs to the polypeptide deformylase family. Requires Fe(2+) as cofactor.

The catalysed reaction is N-terminal N-formyl-L-methionyl-[peptide] + H2O = N-terminal L-methionyl-[peptide] + formate. Its function is as follows. Removes the formyl group from the N-terminal Met of newly synthesized proteins. Requires at least a dipeptide for an efficient rate of reaction. N-terminal L-methionine is a prerequisite for activity but the enzyme has broad specificity at other positions. The polypeptide is Peptide deformylase (Wolbachia sp. subsp. Brugia malayi (strain TRS)).